The primary structure comprises 368 residues: Transmembrane protein 26 (368 aa).

3 consecutive transmembrane segments (helical) span residues 4 to 24, 36 to 56, and 65 to 85; these read LVFLNALATRLLFLLHSLVGV, YWLLALLNLLLFLETALTLKF, and FSPAIFLYLISIVPSLWLLEL. Residue Asn-110 is glycosylated (N-linked (GlcNAc...) asparagine). The next 5 membrane-spanning stretches (helical) occupy residues 150-170, 177-197, 208-228, 257-277, and 281-301; these read QTFLLMLIIGRWLLPIGGGIT, LLLMFVGTAADILEFTSETLE, VYAILVIWTWSMLQFPLDLAV, IGISVFIQDGPFLVVRLILMT, and VINQMLVFFAAKNFLVVVLQL. A disordered region spans residues 324 to 368; the sequence is GEHGCRAQTSESGPSQRDWQNESKEGLAIPLRGSPVTSDDSHHTP. Polar residues predominate over residues 330-341; the sequence is AQTSESGPSQRD.

It localises to the membrane. The sequence is that of Transmembrane protein 26 (TMEM26) from Homo sapiens (Human).